The following is a 261-amino-acid chain: Cytochrome c oxidase subunit 3 (261 aa).

Over 1–15 (MAHQAHAYHMVDPSP) the chain is Mitochondrial matrix. Residues 16–34 (WPLTGAIAALLLTSGTAVW) traverse the membrane as a helical segment. Topologically, residues 35–40 (FHFHSL) are mitochondrial intermembrane. A helical membrane pass occupies residues 41-66 (TLLTMGNILLLLTMYQWWRDIIREGT). The Mitochondrial matrix segment spans residues 67 to 72 (FQGHHT). Residues 73 to 105 (PPVQKGLRYGMILFITSEVFFFLGFFWAFYHSS) traverse the membrane as a helical segment. At 106-128 (LSPTPELGGCWPPTGIITLDPFE) the chain is on the mitochondrial intermembrane side. The helical transmembrane segment at 129–152 (VPLLNTAVLLASGVTVTWAHHSIM) threads the bilayer. The Mitochondrial matrix portion of the chain corresponds to 153 to 155 (EGE). A helical transmembrane segment spans residues 156-183 (RKQTIQALTLTILLGFYFTFLQGMEYYE). The Mitochondrial intermembrane portion of the chain corresponds to 184-190 (APFTIAD). Residues 191–223 (GVYGSTFFVATGFHGLHVIIGSTFLAICLLRQI) form a helical membrane-spanning segment. Residues 224-232 (QYHFTSEHH) are Mitochondrial matrix-facing. Residues 233 to 256 (FGFEAAAWYWHFVDVVWLFLYVSI) form a helical membrane-spanning segment. The Mitochondrial intermembrane portion of the chain corresponds to 257–261 (YWWGS).

The protein belongs to the cytochrome c oxidase subunit 3 family. As to quaternary structure, component of the cytochrome c oxidase (complex IV, CIV), a multisubunit enzyme composed of 14 subunits. The complex is composed of a catalytic core of 3 subunits MT-CO1, MT-CO2 and MT-CO3, encoded in the mitochondrial DNA, and 11 supernumerary subunits COX4I, COX5A, COX5B, COX6A, COX6B, COX6C, COX7A, COX7B, COX7C, COX8 and NDUFA4, which are encoded in the nuclear genome. The complex exists as a monomer or a dimer and forms supercomplexes (SCs) in the inner mitochondrial membrane with NADH-ubiquinone oxidoreductase (complex I, CI) and ubiquinol-cytochrome c oxidoreductase (cytochrome b-c1 complex, complex III, CIII), resulting in different assemblies (supercomplex SCI(1)III(2)IV(1) and megacomplex MCI(2)III(2)IV(2)).

The protein localises to the mitochondrion inner membrane. The enzyme catalyses 4 Fe(II)-[cytochrome c] + O2 + 8 H(+)(in) = 4 Fe(III)-[cytochrome c] + 2 H2O + 4 H(+)(out). Its function is as follows. Component of the cytochrome c oxidase, the last enzyme in the mitochondrial electron transport chain which drives oxidative phosphorylation. The respiratory chain contains 3 multisubunit complexes succinate dehydrogenase (complex II, CII), ubiquinol-cytochrome c oxidoreductase (cytochrome b-c1 complex, complex III, CIII) and cytochrome c oxidase (complex IV, CIV), that cooperate to transfer electrons derived from NADH and succinate to molecular oxygen, creating an electrochemical gradient over the inner membrane that drives transmembrane transport and the ATP synthase. Cytochrome c oxidase is the component of the respiratory chain that catalyzes the reduction of oxygen to water. Electrons originating from reduced cytochrome c in the intermembrane space (IMS) are transferred via the dinuclear copper A center (CU(A)) of subunit 2 and heme A of subunit 1 to the active site in subunit 1, a binuclear center (BNC) formed by heme A3 and copper B (CU(B)). The BNC reduces molecular oxygen to 2 water molecules using 4 electrons from cytochrome c in the IMS and 4 protons from the mitochondrial matrix. The sequence is that of Cytochrome c oxidase subunit 3 (mt-co3) from Salmo salar (Atlantic salmon).